The primary structure comprises 291 residues: GTPase Era (291 aa).

Residues 2–167 (KSGFVSIIGR…LDEIVKYLDE (166 aa)) enclose the Era-type G domain. Positions 10-17 (GRTNAGKS) are G1. 10–17 (GRTNAGKS) contacts GTP. The tract at residues 36–40 (NATRR) is G2. Positions 57-60 (DTPG) are G3. GTP contacts are provided by residues 57-61 (DTPGL) and 116-119 (NKVD). The G4 stretch occupies residues 116–119 (NKVD). A G5 region spans residues 146–148 (YSS). Positions 186-274 (YRDFILESIY…LLKLFVTVKK (89 aa)) constitute a KH type-2 domain.

Belongs to the TRAFAC class TrmE-Era-EngA-EngB-Septin-like GTPase superfamily. Era GTPase family. In terms of assembly, monomer.

The protein resides in the cytoplasm. It localises to the cell inner membrane. An essential GTPase that binds both GDP and GTP, with rapid nucleotide exchange. Plays a role in 16S rRNA processing and 30S ribosomal subunit biogenesis and possibly also in cell cycle regulation and energy metabolism. This chain is GTPase Era, found in Campylobacter jejuni subsp. jejuni serotype O:23/36 (strain 81-176).